The primary structure comprises 80 residues: Exodeoxyribonuclease 7 small subunit (80 aa).

Belongs to the XseB family. As to quaternary structure, heterooligomer composed of large and small subunits.

The protein resides in the cytoplasm. The enzyme catalyses Exonucleolytic cleavage in either 5'- to 3'- or 3'- to 5'-direction to yield nucleoside 5'-phosphates.. Its function is as follows. Bidirectionally degrades single-stranded DNA into large acid-insoluble oligonucleotides, which are then degraded further into small acid-soluble oligonucleotides. This chain is Exodeoxyribonuclease 7 small subunit, found in Rickettsia canadensis (strain McKiel).